The following is a 141-amino-acid chain: Large ribosomal subunit protein uL11 (141 aa).

Belongs to the universal ribosomal protein uL11 family. As to quaternary structure, part of the ribosomal stalk of the 50S ribosomal subunit. Interacts with L10 and the large rRNA to form the base of the stalk. L10 forms an elongated spine to which L12 dimers bind in a sequential fashion forming a multimeric L10(L12)X complex. In terms of processing, one or more lysine residues are methylated.

Its function is as follows. Forms part of the ribosomal stalk which helps the ribosome interact with GTP-bound translation factors. The polypeptide is Large ribosomal subunit protein uL11 (Helicobacter hepaticus (strain ATCC 51449 / 3B1)).